Here is a 309-residue protein sequence, read N- to C-terminus: Potassium channel subfamily K member 16 (309 aa).

Over 1 to 13 (MPSAGLCSCWGGR) the chain is Cytoplasmic. A helical membrane pass occupies residues 14 to 34 (VLPLLLAYVCYLLLGATIFQL). The pore-forming intramembrane region spans 98–116 (SFFFAGTVVTTIGYGNLAP). The K(+) site is built by T108, I109, G110, and Y111. Residues 108-113 (TIGYGN) form a selectivity filter 1 region. The chain crosses the membrane as a helical span at residues 120–140 (AGQVFCVFYALLGIPLNVIFL). The Cytoplasmic segment spans residues 141–165 (NHLGTGLRAHLAAIERWEDRPRRSQ). The helical transmembrane segment at 166-186 (VLQVLGLALFLTLGTLVILIF) threads the bilayer. An intramembrane region (pore-forming) is located at residues 202–221 (GFYFAFITLSTIGFGDYVVG). Positions 212, 213, 214, and 215 each coordinate K(+). The interval 212–217 (TIGFGD) is selectivity filter 2. A helical membrane pass occupies residues 238 to 258 (IWILLGLAWLALILPLGPLLL). The Cytoplasmic segment spans residues 259–309 (HRCCQLWLLSLRQGCGAKAAPGRRPRRGSTAARGVQVTPQDFPISKKGLGS).

The protein belongs to the two pore domain potassium channel (TC 1.A.1.8) family. Homodimer; disulfide-linked. Heterodimer with KCNK17 and KCNK5. Highly expressed in pancreas, in both endocrine (alpha, beta, gamma, delta, and epsilon) and exocrine (acinar and ductal) cells. Expressed in pacreatic beta-cells (at protein level). Expressed in pacreatic delta-cells (at protein level). Not detectable in the other tissues tested.

Its subcellular location is the endoplasmic reticulum membrane. It is found in the cell membrane. It localises to the mitochondrion inner membrane. The enzyme catalyses K(+)(in) = K(+)(out). The catalysed reaction is Rb(+)(in) = Rb(+)(out). It carries out the reaction Cs(+)(in) = Cs(+)(out). With respect to regulation, the channel conductance is stimulated by extracellular alkaline pH. Inhibited by Ba(2+) ions, quinine, quinidine, chloroform and halothane. In terms of biological role, k(+) channel that conducts voltage-dependent outward rectifying currents upon membrane depolarization. Voltage sensing is coupled to K(+) electrochemical gradient in an 'ion flux gating' mode where outward but not inward ion flow opens the gate. Homo- and heterodimerizes to form functional channels with distinct regulatory and gating properties. In pancreatic islets, conducts K(+) countercurrents for Ca(2+) release from the endoplasmic reticulum (ER) and regulates the frequency and duration of cytosolic Ca(2+) oscillations coupled to secretion of pancreatic hormones. In pancreatic beta cells, drives ER Ca(2+) efflux, which in turn activates Ca(2+)-dependent plasma membrane K(+) slow currents and cytosolic Ca(2+) influx, overall contributing to synchronous cytosolic Ca(2+) oscillations. Limits glucose-induced cytosolic Ca(2+) oscillations coupled to second-phase INS secretion. Contributes to beta cell adaptation to acute inflammation by maintaining normal cytosolic Ca(2+) levels and INS secretion. May regulate beta cell mitochondrial Ca(2+) levels either indirectly via ER Ca(2+) efflux or directly by hyperpolarizing the mitochondrial membrane potential. Limits mitochondrial Ca(2+) oscillations and ATP production involved in glucose homeostasis upon metabolic stress. In pancreatic delta cells, limits Ca(2+)-induced Ca(2+)-release involved in somatostatin secretion and modulates islet paracrine signaling involved in glucagon secretion. Permeable to other monovalent cations such as Rb(+) and Cs(+). The sequence is that of Potassium channel subfamily K member 16 from Homo sapiens (Human).